A 488-amino-acid chain; its full sequence is Aspartyl/glutamyl-tRNA(Asn/Gln) amidotransferase subunit B (488 aa).

This sequence belongs to the GatB/GatE family. GatB subfamily. As to quaternary structure, heterotrimer of A, B and C subunits.

The enzyme catalyses L-glutamyl-tRNA(Gln) + L-glutamine + ATP + H2O = L-glutaminyl-tRNA(Gln) + L-glutamate + ADP + phosphate + H(+). It catalyses the reaction L-aspartyl-tRNA(Asn) + L-glutamine + ATP + H2O = L-asparaginyl-tRNA(Asn) + L-glutamate + ADP + phosphate + 2 H(+). Its function is as follows. Allows the formation of correctly charged Asn-tRNA(Asn) or Gln-tRNA(Gln) through the transamidation of misacylated Asp-tRNA(Asn) or Glu-tRNA(Gln) in organisms which lack either or both of asparaginyl-tRNA or glutaminyl-tRNA synthetases. The reaction takes place in the presence of glutamine and ATP through an activated phospho-Asp-tRNA(Asn) or phospho-Glu-tRNA(Gln). The sequence is that of Aspartyl/glutamyl-tRNA(Asn/Gln) amidotransferase subunit B from Ralstonia nicotianae (strain ATCC BAA-1114 / GMI1000) (Ralstonia solanacearum).